A 500-amino-acid polypeptide reads, in one-letter code: Glutathione gamma-glutamylcysteinyltransferase 1 (500 aa).

Residues 1–221 (MEVASLYRRV…GFMLVSRRSS (221 aa)) enclose the Peptidase C83 domain. Active-site residues include cysteine 56, histidine 162, and aspartate 180.

It belongs to the phytochelatin synthase family. As to expression, expressed in roots and shoots.

The enzyme catalyses [Glu(-Cys)](n)-Gly + glutathione + H(+) = [Glu(-Cys)](n+1)-Gly + glycine. Requires cadmium for activity. Involved in the synthesis of phytochelatins (PC) and homophytochelatins (hPC), the heavy-metal-binding peptides of plants. This is Glutathione gamma-glutamylcysteinyltransferase 1 (PCS1) from Triticum aestivum (Wheat).